Here is a 340-residue protein sequence, read N- to C-terminus: Probable protein phosphatase 2C 21 (340 aa).

The disordered stretch occupies residues M1–H21. The PPM-type phosphatase domain maps to K24–F305. D58, G59, D254, and D296 together coordinate Mn(2+). A disordered region spans residues D311–D340. The span at A316–D340 shows a compositional bias: basic and acidic residues.

Belongs to the PP2C family. Mg(2+) serves as cofactor. The cofactor is Mn(2+).

It carries out the reaction O-phospho-L-seryl-[protein] + H2O = L-seryl-[protein] + phosphate. The catalysed reaction is O-phospho-L-threonyl-[protein] + H2O = L-threonyl-[protein] + phosphate. The chain is Probable protein phosphatase 2C 21 from Oryza sativa subsp. japonica (Rice).